Here is a 215-residue protein sequence, read N- to C-terminus: MDGERMMLRVIDNLIVREKLTTIRCRGIDPASFRRGVTDIGRYMAYEFADTLKWREVEVETPLGTASGVEITDRDRIVLLSILRASLPFTEGVMKVFPEAEHGIIGARRSDEPPFRVSIDYIRVPELDDKILVIADPMLATGNTMIGILEALEAHGSPARTVVFNIISSRMGLDRVLQRGIDVYTCGVEEEVNDMGYIVPGLGDAGDLAFGRPSD.

Residues R84, R109, and 136–144 (DPMLATGNT) each bind 5-phospho-alpha-D-ribose 1-diphosphate. Uracil is bound by residues I198 and 203 to 205 (GDA). Position 204 (D204) interacts with 5-phospho-alpha-D-ribose 1-diphosphate.

This sequence belongs to the UPRTase family. Mg(2+) serves as cofactor.

The catalysed reaction is UMP + diphosphate = 5-phospho-alpha-D-ribose 1-diphosphate + uracil. It participates in pyrimidine metabolism; UMP biosynthesis via salvage pathway; UMP from uracil: step 1/1. With respect to regulation, allosterically activated by GTP. In terms of biological role, catalyzes the conversion of uracil and 5-phospho-alpha-D-ribose 1-diphosphate (PRPP) to UMP and diphosphate. The sequence is that of Uracil phosphoribosyltransferase from Methanothermobacter thermautotrophicus (strain ATCC 29096 / DSM 1053 / JCM 10044 / NBRC 100330 / Delta H) (Methanobacterium thermoautotrophicum).